Reading from the N-terminus, the 148-residue chain is MALAVLAWRTRTAVIALLSPPQAAALAVRYASKKTGGSSKNLGGKSPGKRFGIRKMEGHYVHAGNILATQRHFRWHPGAHVGLGKNKCLYALEEGVVRYTKEVYVPSPSNSEAVDLVTRLPEGAVLYKTFVHVVPAKPEGTFKLVAML.

Residues 1–30 (MALAVLAWRTRTAVIALLSPPQAAALAVRY) constitute a mitochondrion transit peptide.

This sequence belongs to the bacterial ribosomal protein bL27 family. As to quaternary structure, component of the mitochondrial ribosome large subunit (39S) which comprises a 16S rRNA and about 50 distinct proteins.

The protein resides in the mitochondrion. The sequence is that of Large ribosomal subunit protein bL27m (MRPL27) from Bos taurus (Bovine).